The following is a 276-amino-acid chain: Rhomboid protease GlpG (276 aa).

Transmembrane regions (helical) follow at residues 94–114, 142–162, 169–189, 192–212, 229–249, and 250–270; these read GPVT…MQIL, ALMH…WYLG, LGSG…GYVQ, FSGP…GYVW, LIIF…GMSM, and ANGA…VDSL. Ser-201 (nucleophile) is an active-site residue. The active site involves His-254.

Belongs to the peptidase S54 family.

Its subcellular location is the cell inner membrane. It carries out the reaction Cleaves type-1 transmembrane domains using a catalytic dyad composed of serine and histidine that are contributed by different transmembrane domains.. Functionally, rhomboid-type serine protease that catalyzes intramembrane proteolysis. This is Rhomboid protease GlpG from Shigella boydii serotype 4 (strain Sb227).